Consider the following 727-residue polypeptide: MPRRKKKIKEASESQNLEKKDLETSSCVSIKKKRRLEDLLIVISDSDGEETKEENGLQKTKTKQSNRSKCLAKRKVAHMSEEEQFALALKMSEQEAREVNNQEEKEEELLRKAIAESLNSCWSSAASATRSRPLAAELSSHSHQENTKDSGTTEGVWQLVPPSLCKGSHVSQGNEAEQRKEPWDHNENTEEEPVSGSSGSWDQSSQPVFENENVKCFDRCTGHLAEHTQCGKPQESTGSGYAFSKAVQGRGDTSRQCLPIPADTKGLQDTGGTVHYYWGIPFCPAGVDPNQYTNVILCQLEVYQKSLKMAQRQLVKKRGFGEPVLPRPPFLIQNECGQEDQTSDKNEGISEDMGDEAKEERQESRASVWHSETKDFQKSPIKSLKQKLLLEEEPTTSRGQSSQGLFVEETSEEGLKSSEGDNSVPTTQSIAALTSKRSLVLMPESSAEEITVCPETQLSFLEPLDLNREDSPDSRELPIEVRMAVGDKQVANREDCMKENPPPAVSSSTRVSCPLCNQDFPPTKIEQHAMYCNGLMEQETVLTRRRREAKNKSDGRTAAQPALDANRKEKCYLCKSLVPLGEYQCHVEACLQLAKVDREDGIEGTRRPRVCAPVEGKQQQRLKKSKDKGHSQGRLLSLLEQSEHRTTGVEKKPKYSEVRTFRMPSPEVEEASCSREMQSTLSQLNLNESPIKSFVPVSEATNCLVDFKEQFAFRSRTKSGRGRRRKS.

The interval 1 to 23 is disordered; sequence MPRRKKKIKEASESQNLEKKDLE. The necessary for transcriptional repression stretch occupies residues 1 to 101; that stretch reads MPRRKKKIKE…SEQEAREVNN (101 aa). Residues 9–23 show a composition bias toward basic and acidic residues; the sequence is KEASESQNLEKKDLE. Lysine 20 participates in a covalent cross-link: Glycyl lysine isopeptide (Lys-Gly) (interchain with G-Cter in SUMO2). Position 29 is a phosphoserine (serine 29). Residue lysine 31 forms a Glycyl lysine isopeptide (Lys-Gly) (interchain with G-Cter in SUMO2) linkage. A phosphoserine mark is found at serine 44 and serine 46. The interval 45–70 is disordered; the sequence is DSDGEETKEENGLQKTKTKQSNRSKC. Threonine 51 carries the post-translational modification Phosphothreonine. Over residues 60 to 70 the composition is skewed to basic residues; the sequence is TKTKQSNRSKC. The LR motif signature appears at 60 to 78; the sequence is TKTKQSNRSKCLAKRKVAH. Residues lysine 75 and lysine 90 each participate in a glycyl lysine isopeptide (Lys-Gly) (interchain with G-Cter in SUMO2) cross-link. UIM domains lie at 80–99 and 104–124; these read SEEEQFALALKMSEQEAREV and EKEEELLRKAIAESLNSCWSS. A UIM-linker region spans residues 97-103; that stretch reads REVNNQE. Residues 100–200 form a necessary for interaction with NR6A1 N-terminus region; it reads NNQEEKEEEL…EEPVSGSSGS (101 aa). The segment at 133-206 is disordered; it reads PLAAELSSHS…SSGSWDQSSQ (74 aa). A Phosphoserine modification is found at serine 140. A compositionally biased stretch (basic and acidic residues) spans 176–188; the sequence is AEQRKEPWDHNEN. The segment covering 195–206 has biased composition (low complexity); sequence SGSSGSWDQSSQ. At serine 205 the chain carries Phosphoserine. A Glycyl lysine isopeptide (Lys-Gly) (interchain with G-Cter in SUMO2) cross-link involves residue lysine 245. The interval 270 to 400 is AIR; it reads TGGTVHYYWG…EEEPTTSRGQ (131 aa). A disordered region spans residues 326–427; that stretch reads PRPPFLIQNE…SEGDNSVPTT (102 aa). The span at 355 to 364 shows a compositional bias: basic and acidic residues; sequence DEAKEERQES. Phosphoserine is present on serine 379. Glycyl lysine isopeptide (Lys-Gly) (interchain with G-Cter in SUMO2) cross-links involve residues lysine 382 and lysine 387. The tract at residues 400–508 is necessary for interaction with NR6A1 C-terminus; it reads QSSQGLFVEE…ENPPPAVSSS (109 aa). Residue serine 402 is modified to Phosphoserine. Lysine 436 is covalently cross-linked (Glycyl lysine isopeptide (Lys-Gly) (interchain with G-Cter in SUMO2)). Serine 474 bears the Phosphoserine mark. The UBZ4-type zinc-finger motif lies at 510-537; the sequence is RVSCPLCNQDFPPTKIEQHAMYCNGLME. Residues cysteine 513, cysteine 516, histidine 528, and cysteine 532 each contribute to the Zn(2+) site. The tract at residues 513 to 590 is zinc-finger-like region; sequence CPLCNQDFPP…GEYQCHVEAC (78 aa). Glycyl lysine isopeptide (Lys-Gly) (interchain with G-Cter in SUMO2) cross-links involve residues lysine 552, lysine 570, lysine 595, and lysine 617. A disordered region spans residues 607–654; it reads RPRVCAPVEGKQQQRLKKSKDKGHSQGRLLSLLEQSEHRTTGVEKKPK. Serine 637 carries the phosphoserine modification. Residues 641 to 654 are compositionally biased toward basic and acidic residues; sequence QSEHRTTGVEKKPK. Lysine 652 is covalently cross-linked (Glycyl lysine isopeptide (Lys-Gly) (interchain with G-Cter in SUMO2)). Phosphoserine is present on residues serine 665 and serine 689. Residue lysine 708 forms a Glycyl lysine isopeptide (Lys-Gly) (interchain with G-Cter in SUMO2) linkage.

It belongs to the RAP80 family. Component of the ARISC complex, at least composed of UIMC1/RAP80, ABRAXAS1, BRCC3/BRCC36, BABAM2 and BABAM1/NBA1. Component of the BRCA1-A complex, at least composed of the BRCA1, BARD1, UIMC1/RAP80, ABRAXAS1, BRCC3/BRCC36, BABAM2 and BABAM1/NBA1. In the BRCA1-A complex, interacts directly with ABRAXAS1. Interacts with ESR1. Interacts with UBE2I. Interacts with NR6A1. Interacts with TSP57. Interacts with TRAIP. Post-translationally, sumoylated. In terms of processing, phosphorylated upon DNA damage by ATM or ATR.

Its subcellular location is the nucleus. Functionally, ubiquitin-binding protein. Specifically recognizes and binds 'Lys-63'-linked ubiquitin. Plays a central role in the BRCA1-A complex by specifically binding 'Lys-63'-linked ubiquitinated histones H2A and H2AX at DNA lesions sites, leading to target the BRCA1-BARD1 heterodimer to sites of DNA damage at double-strand breaks (DSBs). The BRCA1-A complex also possesses deubiquitinase activity that specifically removes 'Lys-63'-linked ubiquitin on histones H2A and H2AX. Also weakly binds monoubiquitin but with much less affinity than 'Lys-63'-linked ubiquitin. May interact with monoubiquitinated histones H2A and H2B; the relevance of such results is however unclear in vivo. Does not bind Lys-48'-linked ubiquitin. May indirectly act as a transcriptional repressor by inhibiting the interaction of NR6A1 with the corepressor NCOR1. The polypeptide is BRCA1-A complex subunit RAP80 (Uimc1) (Mus musculus (Mouse)).